Consider the following 367-residue polypeptide: Cytochrome b (367 aa).

4 helical membrane-spanning segments follow: residues Phe25–Ile45, Trp69–Ile90, Trp105–Leu125, and Phe170–Ile190. Residues His75 and His89 each contribute to the heme b site. The heme b site is built by His174 and His188. Residue His193 coordinates a ubiquinone. 4 helical membrane-spanning segments follow: residues Tyr218–Thr238, Leu280–His300, Leu312–Thr332, and Phe339–Pro358.

It belongs to the cytochrome b family. The cytochrome bc1 complex contains 3 respiratory subunits (MT-CYB, CYC1 and UQCRFS1), 2 core proteins (UQCRC1 and UQCRC2) and probably 6 low-molecular weight proteins. Requires heme b as cofactor.

Its subcellular location is the mitochondrion inner membrane. In terms of biological role, component of the ubiquinol-cytochrome c reductase complex (complex III or cytochrome b-c1 complex) that is part of the mitochondrial respiratory chain. The b-c1 complex mediates electron transfer from ubiquinol to cytochrome c. Contributes to the generation of a proton gradient across the mitochondrial membrane that is then used for ATP synthesis. This Austrelaps superbus (Lowland copperhead snake) protein is Cytochrome b (MT-CYB).